Reading from the N-terminus, the 229-residue chain is Urease accessory protein UreF (229 aa).

Belongs to the UreF family. UreD, UreF and UreG form a complex that acts as a GTP-hydrolysis-dependent molecular chaperone, activating the urease apoprotein by helping to assemble the nickel containing metallocenter of UreC. The UreE protein probably delivers the nickel.

The protein localises to the cytoplasm. Functionally, required for maturation of urease via the functional incorporation of the urease nickel metallocenter. The chain is Urease accessory protein UreF from Staphylococcus saprophyticus subsp. saprophyticus (strain ATCC 15305 / DSM 20229 / NCIMB 8711 / NCTC 7292 / S-41).